The primary structure comprises 122 residues: uncharacterized protein (122 aa).

This is an uncharacterized protein from Rickettsia conorii (strain ATCC VR-613 / Malish 7).